A 334-amino-acid polypeptide reads, in one-letter code: Trans-1,2-dihydrobenzene-1,2-diol dehydrogenase (334 aa).

Belongs to the Gfo/Idh/MocA family. In terms of assembly, homodimer. As to expression, small intestine.

It carries out the reaction (1R,2R)-1,2-dihydrobenzene-1,2-diol + NADP(+) = catechol + NADPH + H(+). It catalyses the reaction D-xylose + NADP(+) = D-xylono-1,5-lactone + NADPH + H(+). The chain is Trans-1,2-dihydrobenzene-1,2-diol dehydrogenase (DHDH) from Homo sapiens (Human).